Reading from the N-terminus, the 400-residue chain is MSDSINFVSFNQDYSCVSVGTPQGYKIYNCDPFGKCFSKADGGMGIVEMLFCTSLIAVVGMGDQPQNSPRRLKIVNTKRQSTICELTFPTAVLGVRLNRQRLVVLLQDQIYIYDISNMKLVHTIETSPNPGAVCALSASSSDNNNYLVYPFPAPSSTAFNPGENNINDSSPNRKGDVTIFDCNSLQPVNVVEAHKTPLACLSLNSDGTLLATASDKGTIIRVFSVPKAQKLYEFRRGTYPAQIFSINFNLASNLMAVSSATETVHIFQLEAGVSSTPEVPQDTELAIPTRTPQQKGMASVFRKSSRSLGKGLAGAVGSYLPQTFTGMWEPLRDFAFIKQTSLPGTRSVVSVTSTNPPQVLVVTLEGYFYQYTLDLEKGGECDLIRQYSLLDNVEGSLYGP.

2 WD repeats span residues 193-233 (AHKT…KLYE) and 238-277 (TYPA…SSTP). The L/FRRG motif motif lies at 234–238 (FRRGT).

It belongs to the WD repeat PROPPIN family. As to quaternary structure, component of the PI(3,5)P2 regulatory complex.

The protein resides in the preautophagosomal structure membrane. It is found in the vacuole membrane. Its subcellular location is the endosome membrane. In terms of biological role, the PI(3,5)P2 regulatory complex regulates both the synthesis and turnover of phosphatidylinositol 3,5-bisphosphate (PtdIns(3,5)P2). Necessary for proper vacuole morphology. Plays an important role in osmotically-induced vacuole fragmentation. Required for cytoplasm to vacuole transport (Cvt) vesicle formation, pexophagy and starvation-induced autophagy. Involved in correct ATG9 trafficking to the pre-autophagosomal structure. Might also be involved in premeiotic DNA replication. In Yarrowia lipolytica (strain CLIB 122 / E 150) (Yeast), this protein is Autophagy-related protein 18 (ATG18).